A 228-amino-acid polypeptide reads, in one-letter code: 5'-methylthioadenosine/S-adenosylhomocysteine nucleosidase (228 aa).

Residue Glu11 is the Proton acceptor of the active site. Residues Gly77, Ile151, and 172 to 173 (ME) each bind substrate. Asp196 acts as the Proton donor in catalysis.

The protein belongs to the PNP/UDP phosphorylase family. MtnN subfamily.

It carries out the reaction S-adenosyl-L-homocysteine + H2O = S-(5-deoxy-D-ribos-5-yl)-L-homocysteine + adenine. The catalysed reaction is S-methyl-5'-thioadenosine + H2O = 5-(methylsulfanyl)-D-ribose + adenine. The enzyme catalyses 5'-deoxyadenosine + H2O = 5-deoxy-D-ribose + adenine. It functions in the pathway amino-acid biosynthesis; L-methionine biosynthesis via salvage pathway; S-methyl-5-thio-alpha-D-ribose 1-phosphate from S-methyl-5'-thioadenosine (hydrolase route): step 1/2. Catalyzes the irreversible cleavage of the glycosidic bond in both 5'-methylthioadenosine (MTA) and S-adenosylhomocysteine (SAH/AdoHcy) to adenine and the corresponding thioribose, 5'-methylthioribose and S-ribosylhomocysteine, respectively. Also cleaves 5'-deoxyadenosine, a toxic by-product of radical S-adenosylmethionine (SAM) enzymes, into 5-deoxyribose and adenine. The sequence is that of 5'-methylthioadenosine/S-adenosylhomocysteine nucleosidase from Staphylococcus epidermidis (strain ATCC 12228 / FDA PCI 1200).